The sequence spans 392 residues: Copper-containing nitrite reductase (392 aa).

The N-terminal stretch at 1–18 (MKRQALAAMIASLFALAA) is a signal peptide. Cysteine 19 carries the N-palmitoyl cysteine lipid modification. Cysteine 19 carries S-diacylglycerol cysteine lipidation. The segment at 30-49 (ETPAASAEAASSAAQATAET) is disordered. Plastocyanin-like domains are found at residues 101 to 195 (WTFD…ILVE) and 245 to 346 (GHVG…LKVE). Histidine 134, histidine 139, histidine 174, cysteine 175, histidine 183, and methionine 188 together coordinate Cu cation. Histidine 139 contacts substrate. Histidine 280 lines the substrate pocket. Cu cation is bound at residue histidine 329. The interval 367 to 392 (GAASAPAASAPAASAPAASASEKSVY) is disordered. 4 repeat units span residues 368–372 (AASAP), 373–377 (AASAP), 378–382 (AASAP), and 383–387 (AASAS). Positions 368–387 (AASAPAASAPAASAPAASAS) are 4 X 5 AA tandem repeats of A-A-S-A-P.

Belongs to the multicopper oxidase family. In terms of assembly, homotrimer. Cu(+) serves as cofactor. Requires Cu(2+) as cofactor. Palmitoylated.

It is found in the cell outer membrane. The enzyme catalyses nitric oxide + Fe(III)-[cytochrome c] + H2O = Fe(II)-[cytochrome c] + nitrite + 2 H(+). Catalyzes the reduction of nitrite to nitric oxide (NO), probably with azurin as electron donor. Essential for growth and survival in oxygen-depleted environments. Can also provide protection against killing by normal human sera. The sequence is that of Copper-containing nitrite reductase (aniA) from Neisseria gonorrhoeae.